We begin with the raw amino-acid sequence, 336 residues long: Foldase protein PrsA (336 aa).

The signal sequence occupies residues 1-22; sequence MKSAKKLLSVLCLGIFILTFTA. Cys23 carries the N-palmitoyl cysteine lipid modification. Cys23 is lipidated: S-diacylglycerol cysteine. The region spanning 194 to 286 is the PpiC domain; the sequence is PNTMNVSHIL…WGYHIIKINS (93 aa).

This sequence belongs to the PrsA family.

It is found in the cell membrane. It carries out the reaction [protein]-peptidylproline (omega=180) = [protein]-peptidylproline (omega=0). Plays a major role in protein secretion by helping the post-translocational extracellular folding of several secreted proteins. The polypeptide is Foldase protein PrsA (Clostridium botulinum (strain Langeland / NCTC 10281 / Type F)).